The following is a 280-amino-acid chain: Protein synthesis inhibitor II (280 aa).

A1 is subject to N-acetylalanine. The active site involves E174.

Belongs to the ribosome-inactivating protein family. Type 1 RIP subfamily.

It localises to the cytoplasm. It carries out the reaction Endohydrolysis of the N-glycosidic bond at one specific adenosine on the 28S rRNA.. Its function is as follows. Inhibits the elongation phase of protein synthesis. It inactivates fungal ribosomes even more effectively than mammalian ribosomes and is thought to function as a constitutive antifungal agent in plants. This chain is Protein synthesis inhibitor II (RIP30A), found in Hordeum vulgare (Barley).